Reading from the N-terminus, the 277-residue chain is Sulfur carrier protein FdhD (277 aa).

Cys-121 serves as the catalytic Cysteine persulfide intermediate. 260–265 contacts Mo-bis(molybdopterin guanine dinucleotide); it reads FCKPGR.

It belongs to the FdhD family.

Its subcellular location is the cytoplasm. Its function is as follows. Required for formate dehydrogenase (FDH) activity. Acts as a sulfur carrier protein that transfers sulfur from IscS to the molybdenum cofactor prior to its insertion into FDH. The chain is Sulfur carrier protein FdhD from Shigella dysenteriae serotype 1 (strain Sd197).